The chain runs to 477 residues: Probable glycine dehydrogenase (decarboxylating) subunit 2 (477 aa).

N6-(pyridoxal phosphate)lysine is present on Lys-264.

The protein belongs to the GcvP family. C-terminal subunit subfamily. The glycine cleavage system is composed of four proteins: P, T, L and H. In this organism, the P 'protein' is a heterodimer of two subunits. Pyridoxal 5'-phosphate serves as cofactor.

The enzyme catalyses N(6)-[(R)-lipoyl]-L-lysyl-[glycine-cleavage complex H protein] + glycine + H(+) = N(6)-[(R)-S(8)-aminomethyldihydrolipoyl]-L-lysyl-[glycine-cleavage complex H protein] + CO2. The glycine cleavage system catalyzes the degradation of glycine. The P protein binds the alpha-amino group of glycine through its pyridoxal phosphate cofactor; CO(2) is released and the remaining methylamine moiety is then transferred to the lipoamide cofactor of the H protein. The sequence is that of Probable glycine dehydrogenase (decarboxylating) subunit 2 from Fervidobacterium nodosum (strain ATCC 35602 / DSM 5306 / Rt17-B1).